A 468-amino-acid polypeptide reads, in one-letter code: Ubiquitin carboxyl-terminal hydrolase 17-like protein B (468 aa).

The segment at 1-20 is disordered; it reads MVVALSFPEADPAMSPPSAP. Residues 51–348 enclose the USP domain; the sequence is CGLQNTGNSC…NAYVLFYVQQ (298 aa). The active-site Nucleophile is the cysteine 60. The Proton acceptor role is filled by histidine 307. The segment at 374 to 449 is disordered; the sequence is KKSGEKKHNK…GGQNLRNTEG (76 aa). Residues 394–403 show a composition bias toward basic and acidic residues; that stretch reads CENREKRSSK. Polar residues predominate over residues 422–434; the sequence is GQKQENTKLTPQE.

The protein belongs to the peptidase C19 family. USP17 subfamily. In terms of processing, ubiquitinated. As to expression, detected in brain, heart, liver, lung, kidney, ovary and spleen.

It carries out the reaction Thiol-dependent hydrolysis of ester, thioester, amide, peptide and isopeptide bonds formed by the C-terminal Gly of ubiquitin (a 76-residue protein attached to proteins as an intracellular targeting signal).. Its activity is regulated as follows. Inhibited by ubiquitin aldehyde. Functionally, deubiquitinating enzyme that removes conjugated ubiquitin from specific proteins to regulate different cellular processes. The chain is Ubiquitin carboxyl-terminal hydrolase 17-like protein B from Mus musculus (Mouse).